Here is a 476-residue protein sequence, read N- to C-terminus: ATP synthase subunit beta (476 aa).

157-164 (GGAGVGKT) serves as a coordination point for ATP.

It belongs to the ATPase alpha/beta chains family. F-type ATPases have 2 components, CF(1) - the catalytic core - and CF(0) - the membrane proton channel. CF(1) has five subunits: alpha(3), beta(3), gamma(1), delta(1), epsilon(1). CF(0) has three main subunits: a(1), b(2) and c(9-12). The alpha and beta chains form an alternating ring which encloses part of the gamma chain. CF(1) is attached to CF(0) by a central stalk formed by the gamma and epsilon chains, while a peripheral stalk is formed by the delta and b chains.

Its subcellular location is the cell membrane. It catalyses the reaction ATP + H2O + 4 H(+)(in) = ADP + phosphate + 5 H(+)(out). Functionally, produces ATP from ADP in the presence of a proton gradient across the membrane. The catalytic sites are hosted primarily by the beta subunits. In Mycoplasma genitalium (strain ATCC 33530 / DSM 19775 / NCTC 10195 / G37) (Mycoplasmoides genitalium), this protein is ATP synthase subunit beta.